The primary structure comprises 465 residues: Soluble pyridine nucleotide transhydrogenase (465 aa).

35-44 contributes to the FAD binding site; the sequence is ERYNNVGGGC.

This sequence belongs to the class-I pyridine nucleotide-disulfide oxidoreductase family. Requires FAD as cofactor.

It is found in the cytoplasm. It carries out the reaction NAD(+) + NADPH = NADH + NADP(+). Its function is as follows. Conversion of NADPH, generated by peripheral catabolic pathways, to NADH, which can enter the respiratory chain for energy generation. The polypeptide is Soluble pyridine nucleotide transhydrogenase (Photorhabdus laumondii subsp. laumondii (strain DSM 15139 / CIP 105565 / TT01) (Photorhabdus luminescens subsp. laumondii)).